Here is a 457-residue protein sequence, read N- to C-terminus: Glycerol-3-phosphate acyltransferase 3 (457 aa).

A helical membrane pass occupies residues 14 to 34 (WLTLVGSLILLPSAFGLSLGI). A phosphoserine mark is found at Ser68 and Ser77. Helical transmembrane passes span 137 to 157 (ISPK…CFLL) and 161 to 181 (VTLA…VGQL). The HXXXXD motif motif lies at 229-234 (HTSPID). The tract at residues 429-457 (GNGSPSLALDSSTVDNHGSPEPAFRSESL) is disordered. Residues 431–444 (GSPSLALDSSTVDN) show a composition bias toward polar residues.

The protein belongs to the 1-acyl-sn-glycerol-3-phosphate acyltransferase family.

Its subcellular location is the endoplasmic reticulum membrane. It carries out the reaction sn-glycerol 3-phosphate + an acyl-CoA = a 1-acyl-sn-glycero-3-phosphate + CoA. The catalysed reaction is a 1-acyl-sn-glycero-3-phosphate + an acyl-CoA = a 1,2-diacyl-sn-glycero-3-phosphate + CoA. It catalyses the reaction dodecanoyl-CoA + sn-glycerol 3-phosphate = 1-dodecanoyl-sn-glycerol 3-phosphate + CoA. The enzyme catalyses sn-glycerol 3-phosphate + hexadecanoyl-CoA = 1-hexadecanoyl-sn-glycero-3-phosphate + CoA. It carries out the reaction sn-glycerol 3-phosphate + (9Z)-octadecenoyl-CoA = 1-(9Z-octadecenoyl)-sn-glycero-3-phosphate + CoA. The catalysed reaction is (9Z,12Z)-octadecadienoyl-CoA + sn-glycerol 3-phosphate = 1-(9Z,12Z)-octadecadienoyl-sn-glycero-3-phosphate + CoA. It catalyses the reaction 1-tetradecanoyl-sn-glycerol 3-phosphate + (9Z)-octadecenoyl-CoA = 1-tetradecanoyl-2-(9Z)-octadecenoyl-sn-glycero-3-phosphate + CoA. The enzyme catalyses 1-hexadecanoyl-sn-glycero-3-phosphate + (9Z)-octadecenoyl-CoA = 1-hexadecanoyl-2-(9Z-octadecenoyl)-sn-glycero-3-phosphate + CoA. It carries out the reaction 1-(9Z-octadecenoyl)-sn-glycero-3-phosphate + (9Z)-octadecenoyl-CoA = 1,2-di-(9Z-octadecenoyl)-sn-glycero-3-phosphate + CoA. The catalysed reaction is 1-(6Z,9Z,12Z-octadecatrienoyl)-sn-glycero-3-phosphate + (9Z)-octadecenoyl-CoA = (6Z,9Z,12Z)-octadecatrienoyl-2-(9Z)-octadecenoyl-sn-glycero-3-phosphate + CoA. It catalyses the reaction 1-(9Z,12Z,15Z)-octadecatrienoyl-sn-glycero-3-phosphate + (9Z)-octadecenoyl-CoA = 1-(9Z,12Z,15Z)-octadecatrienoyl-2-(9Z)-octadecenoyl-sn-glycero-3-phosphate + CoA. The enzyme catalyses 1-(9Z-octadecenoyl)-sn-glycero-3-phosphate + tetradecanoyl-CoA = 1-(9Z)-octadecenoyl-2-tetradecanoyl-sn-glycero-3-phosphate + CoA. It carries out the reaction 1-(9Z-octadecenoyl)-sn-glycero-3-phosphate + hexadecanoyl-CoA = 1-(9Z)-octadecenoyl-2-hexadecanoyl-sn-glycero-3-phosphate + CoA. The catalysed reaction is 1-(9Z-octadecenoyl)-sn-glycero-3-phosphate + octadecanoyl-CoA = 1-(9Z-octadecenoyl)-2-octadecanoyl-sn-glycero-3-phosphate + CoA. It catalyses the reaction 1-(9Z-octadecenoyl)-sn-glycero-3-phosphate + (9Z,12Z)-octadecadienoyl-CoA = 1-(9Z)-octadecenoyl-2-(9Z,12Z)-octadecadienoyl-sn-glycero-3-phosphate + CoA. The enzyme catalyses 1-(5Z,8Z,11Z,14Z-eicosatetraenoyl)-sn-glycero-3-phosphate + (9Z)-octadecenoyl-CoA = 1-(5Z,8Z,11Z,14Z)-eicosatetraenoyl-2-(9Z)-octadecenoyl-sn-glycero-3-phosphate + CoA. It participates in glycerolipid metabolism; triacylglycerol biosynthesis. The protein operates within phospholipid metabolism; CDP-diacylglycerol biosynthesis; CDP-diacylglycerol from sn-glycerol 3-phosphate: step 1/3. Converts glycerol-3-phosphate to 1-acyl-sn-glycerol-3-phosphate (lysophosphatidic acid or LPA) by incorporating an acyl moiety at the sn-1 position of the glycerol backbone. Also converts LPA into 1,2-diacyl-sn-glycerol-3-phosphate (phosphatidic acid or PA) by incorporating an acyl moiety at the sn-2 position of the glycerol backbone. Protects cells against lipotoxicity. This chain is Glycerol-3-phosphate acyltransferase 3, found in Rattus norvegicus (Rat).